Consider the following 417-residue polypeptide: Sulfate adenylyltransferase (417 aa).

It belongs to the sulfate adenylyltransferase family.

It catalyses the reaction sulfate + ATP + H(+) = adenosine 5'-phosphosulfate + diphosphate. It participates in sulfur metabolism; hydrogen sulfide biosynthesis; sulfite from sulfate: step 1/3. The polypeptide is Sulfate adenylyltransferase (Psychrobacter cryohalolentis (strain ATCC BAA-1226 / DSM 17306 / VKM B-2378 / K5)).